We begin with the raw amino-acid sequence, 672 residues long: Cytadherence high molecular weight protein 3 (672 aa).

25 repeat units span residues 98–100 (YDQ), 106–108 (YDQ), 160–162 (PVV), 197–199 (YDQ), 206–208 (YDQ), 211–213 (YDQ), 221–223 (YDQ), 226–228 (YDQ), 235–237 (YDQ), 249–251 (YDQ), 288–290 (PVV), 310–319 (VEPTPTPVVE), 312–315 (PTPT), 316–318 (PVV), 322–324 (PVV), 330–339 (VEPTPTPVVE), 332–335 (PTPT), 336–338 (PVV), 354–358 (PQPTP), 385–389 (PTPVP), 396–400 (PQPTP), 402–404 (PVV), 413–415 (PVV), 424–428 (PTPAP), and 454–456 (PVV). A 9 X 3 AA repeats OF Y-D-Q region spans residues 98 to 251 (YDQVNNTFYD…NAYNTQNYDQ (154 aa)). An 8 X 3 AA repeats of P-V-V region spans residues 160–456 (PVVDPDATPE…QTTPAVPPVV (297 aa)). Residues 177–197 (GLDPLPQAPDEYQDTTAPPAY) form a disordered region. A 2 X 10 AA repeats of V-E-P-T-P-T-P-V-V-E region spans residues 310-339 (VEPTPTPVVETAPVVEAPKVVEPTPTPVVE). A 6 X 5 AA repeats of P-X-P-X-P region spans residues 312–428 (PTPTPVVETA…PKVVTPTPAP (117 aa)).

It is found in the cell projection. The protein localises to the attachment organelle membrane. Component of the cytoskeleton-like structure which stabilizes the shape of the wall-less mycoplasma. This cytoskeleton-like network of accessory proteins containing HMW proteins 1 to 5 allows the proper anchoring of cytadhesin proteins in the mycoplasmal membrane at the attachment organelle. Essential for successful surface parasitism. This is Cytadherence high molecular weight protein 3 (hmw3) from Mycoplasma pneumoniae (strain ATCC 29342 / M129 / Subtype 1) (Mycoplasmoides pneumoniae).